A 419-amino-acid chain; its full sequence is Enolase (419 aa).

A (2R)-2-phosphoglycerate-binding site is contributed by Q161. The active-site Proton donor is the E205. Residues D240, E283, and D309 each coordinate Mg(2+). K334, R363, S364, and K385 together coordinate (2R)-2-phosphoglycerate. The active-site Proton acceptor is the K334.

Belongs to the enolase family. Requires Mg(2+) as cofactor.

Its subcellular location is the cytoplasm. It is found in the secreted. The protein localises to the cell surface. The catalysed reaction is (2R)-2-phosphoglycerate = phosphoenolpyruvate + H2O. It functions in the pathway carbohydrate degradation; glycolysis; pyruvate from D-glyceraldehyde 3-phosphate: step 4/5. Functionally, catalyzes the reversible conversion of 2-phosphoglycerate (2-PG) into phosphoenolpyruvate (PEP). It is essential for the degradation of carbohydrates via glycolysis. The chain is Enolase from Saccharolobus solfataricus (strain ATCC 35092 / DSM 1617 / JCM 11322 / P2) (Sulfolobus solfataricus).